The following is a 645-amino-acid chain: 1-deoxy-D-xylulose-5-phosphate synthase 1 (645 aa).

Residues histidine 79 and 120–122 each bind thiamine diphosphate; that span reads GHS. Residue aspartate 151 participates in Mg(2+) binding. Thiamine diphosphate-binding positions include 152–153, asparagine 180, tyrosine 291, and glutamate 373; that span reads GS. Residue asparagine 180 participates in Mg(2+) binding.

This sequence belongs to the transketolase family. DXPS subfamily. Homodimer. Mg(2+) serves as cofactor. Requires thiamine diphosphate as cofactor.

The catalysed reaction is D-glyceraldehyde 3-phosphate + pyruvate + H(+) = 1-deoxy-D-xylulose 5-phosphate + CO2. It participates in metabolic intermediate biosynthesis; 1-deoxy-D-xylulose 5-phosphate biosynthesis; 1-deoxy-D-xylulose 5-phosphate from D-glyceraldehyde 3-phosphate and pyruvate: step 1/1. In terms of biological role, catalyzes the acyloin condensation reaction between C atoms 2 and 3 of pyruvate and glyceraldehyde 3-phosphate to yield 1-deoxy-D-xylulose-5-phosphate (DXP). This chain is 1-deoxy-D-xylulose-5-phosphate synthase 1, found in Rhodospirillum rubrum (strain ATCC 11170 / ATH 1.1.1 / DSM 467 / LMG 4362 / NCIMB 8255 / S1).